A 137-amino-acid chain; its full sequence is Small ribosomal subunit protein bS16 (137 aa).

It belongs to the bacterial ribosomal protein bS16 family.

The chain is Small ribosomal subunit protein bS16 from Leuconostoc citreum (strain KM20).